A 904-amino-acid polypeptide reads, in one-letter code: Putative pentatricopeptide repeat-containing protein At1g19290 (904 aa).

PPR repeat units lie at residues 154 to 188 (SPTV…GRIP), 189 to 223 (SLLS…EVSP), 224 to 254 (DVFT…TESS), 260 to 294 (NVVT…GVSR), 295 to 329 (NVVT…KLVA), 330 to 364 (DQHM…GVRT), 365 to 399 (NTTI…SLKP), 400 to 434 (DHHT…EVVP), 435 to 469 (TVMT…GVNA), 470 to 504 (DEIS…GLLT), 505 to 539 (DTIT…RCKP), 540 to 574 (AVQT…GIFP), 575 to 609 (TIEM…GLTP), 610 to 644 (TVAT…GITL), 645 to 679 (NVNI…DLLL), 718 to 753 (NNIV…RFIP), 754 to 788 (DEYT…GIIP), 789 to 823 (NIVT…GITP), and 824 to 858 (NAIT…GLVR).

It belongs to the PPR family. P subfamily.

The chain is Putative pentatricopeptide repeat-containing protein At1g19290 from Arabidopsis thaliana (Mouse-ear cress).